Consider the following 500-residue polypeptide: Potassium/proton antiporter CemA (500 aa).

Residues 129-149 (LFLTTIKTIFILFFVPFLVNF) form a helical membrane-spanning segment. The insert stretch occupies residues 204-354 (HQTHRDSKPL…GSLDSIKNKD (151 aa)). Helical transmembrane passes span 378–398 (ITNF…LITL), 425–445 (ILLI…ELFF), and 461–481 (IFLL…YLIF).

Belongs to the CemA family.

The protein localises to the plastid. It localises to the chloroplast inner membrane. The catalysed reaction is K(+)(in) + H(+)(out) = K(+)(out) + H(+)(in). Functionally, contributes to K(+)/H(+) antiport activity by supporting proton efflux to control proton extrusion and homeostasis in chloroplasts in a light-dependent manner to modulate photosynthesis. Prevents excessive induction of non-photochemical quenching (NPQ) under continuous-light conditions. Indirectly promotes efficient inorganic carbon uptake into chloroplasts. This is Potassium/proton antiporter CemA from Chlamydomonas reinhardtii (Chlamydomonas smithii).